A 221-amino-acid chain; its full sequence is GTP cyclohydrolase 1 (221 aa).

3 residues coordinate Zn(2+): Cys111, His114, and Cys182.

The protein belongs to the GTP cyclohydrolase I family. As to quaternary structure, homomer.

It carries out the reaction GTP + H2O = 7,8-dihydroneopterin 3'-triphosphate + formate + H(+). Its pathway is cofactor biosynthesis; 7,8-dihydroneopterin triphosphate biosynthesis; 7,8-dihydroneopterin triphosphate from GTP: step 1/1. This Erwinia tasmaniensis (strain DSM 17950 / CFBP 7177 / CIP 109463 / NCPPB 4357 / Et1/99) protein is GTP cyclohydrolase 1.